The following is a 583-amino-acid chain: MERSMYAGRVRSEHIGTTITLKGWVSRRRNLGGLIFIDLRDREGLMQLVVNPENADAAVVETAESLRSEFVIEVTGTVEAREQANDNLPTGAVELKVKDLKVLNTAKTTPFEIKDGVEASDDTRMRYRYLDLRRPEMLENFKLRAKVTHTIRNYLDDLEFIDVETPMLTKSTPEGARDYLVPSRVSQGHFYALPQSPQITKQLLMNAGFDRYYQIVKCFRDEDLRGDRQPEFTQVDLETSFLNEQEIQDITEGLIAKVMKETKGVEVTLPFPRMSYDDAMNNYGSDKPDTRFDMLLQDLTELVKDVDFKVFAEAPAVKAIVVKGNADKYSRKSIDKLTDFAKQFGAKGLAWVKMTDGVLAGPVAKFLTSIEEKLTDTLQIEENDLVLFVADTLEIANNTLGALRNQIAKELDMIDNTKFNFLWVVDWPMFEWSEEEGRYMSAHHPFTLPTEDSAAELEGDLSKVRAVAYDIVLNGYELGGGSLRINQKDLQERMLKALGFSEESAYEQFGFLLEAMDYGFPPHGGLALGLDRFVMLLAGKDNIREVIAFPKNNKASDPMTQAPSLVADKQLEELALHVELENE.

L-aspartate is bound at residue Glu174. Residues Gln198–Lys201 are aspartate. Position 220 (Arg220) interacts with L-aspartate. Residues Arg220–Glu222 and Gln229 each bind ATP. His443 is an L-aspartate binding site. ATP is bound at residue Glu477. Arg484 provides a ligand contact to L-aspartate. Residue Gly529–Arg532 participates in ATP binding.

Belongs to the class-II aminoacyl-tRNA synthetase family. Type 1 subfamily. In terms of assembly, homodimer.

It is found in the cytoplasm. The catalysed reaction is tRNA(Asp) + L-aspartate + ATP = L-aspartyl-tRNA(Asp) + AMP + diphosphate. In terms of biological role, catalyzes the attachment of L-aspartate to tRNA(Asp) in a two-step reaction: L-aspartate is first activated by ATP to form Asp-AMP and then transferred to the acceptor end of tRNA(Asp). In Streptococcus thermophilus (strain ATCC BAA-250 / LMG 18311), this protein is Aspartate--tRNA ligase.